The primary structure comprises 184 residues: Photosystem I assembly protein Ycf4 (184 aa).

The next 2 helical transmembrane spans lie at 19–39 (ISNFCWAFLLFLGSLGFVLVG) and 64–84 (LVMSFYGIAGLFISSYLWCTI).

Belongs to the Ycf4 family.

It is found in the plastid. Its subcellular location is the chloroplast thylakoid membrane. Functionally, seems to be required for the assembly of the photosystem I complex. This Oenothera elata subsp. hookeri (Hooker's evening primrose) protein is Photosystem I assembly protein Ycf4.